We begin with the raw amino-acid sequence, 202 residues long: Peptide methionine sulfoxide reductase A1 (202 aa).

The disordered stretch occupies residues 1–20 (MNILNKLGIGSSRQTNMDPS). Residue Ser189 is modified to Phosphoserine.

Belongs to the MsrA Met sulfoxide reductase family.

Its subcellular location is the cytoplasm. The protein resides in the cytosol. The catalysed reaction is L-methionyl-[protein] + [thioredoxin]-disulfide + H2O = L-methionyl-(S)-S-oxide-[protein] + [thioredoxin]-dithiol. It catalyses the reaction [thioredoxin]-disulfide + L-methionine + H2O = L-methionine (S)-S-oxide + [thioredoxin]-dithiol. Its function is as follows. Catalyzes the reduction of methionine sulfoxide (MetSO) to methionine in proteins. Plays a protective role against oxidative stress by restoring activity to proteins that have been inactivated by methionine oxidation. MSRA family specifically reduces the MetSO S-enantiomer. This is Peptide methionine sulfoxide reductase A1 (MSRA1) from Arabidopsis thaliana (Mouse-ear cress).